A 371-amino-acid polypeptide reads, in one-letter code: uncharacterized protein (371 aa).

The segment at K339–H371 is disordered.

This is an uncharacterized protein from Escherichia coli (strain K12).